Reading from the N-terminus, the 231-residue chain is 7-cyano-7-deazaguanine synthase (231 aa).

8 to 18 contacts ATP; sequence FSGGQDSTTCL. C188, C197, C200, and C203 together coordinate Zn(2+).

This sequence belongs to the QueC family. Zn(2+) serves as cofactor.

It catalyses the reaction 7-carboxy-7-deazaguanine + NH4(+) + ATP = 7-cyano-7-deazaguanine + ADP + phosphate + H2O + H(+). The protein operates within purine metabolism; 7-cyano-7-deazaguanine biosynthesis. In terms of biological role, catalyzes the ATP-dependent conversion of 7-carboxy-7-deazaguanine (CDG) to 7-cyano-7-deazaguanine (preQ(0)). The polypeptide is 7-cyano-7-deazaguanine synthase (Salmonella gallinarum (strain 287/91 / NCTC 13346)).